We begin with the raw amino-acid sequence, 175 residues long: Peptide deformylase (175 aa).

Residues Cys-96 and His-138 each contribute to the Fe cation site. The active site involves Glu-139. Fe cation is bound at residue His-142.

Belongs to the polypeptide deformylase family. Fe(2+) is required as a cofactor.

The enzyme catalyses N-terminal N-formyl-L-methionyl-[peptide] + H2O = N-terminal L-methionyl-[peptide] + formate. Its function is as follows. Removes the formyl group from the N-terminal Met of newly synthesized proteins. Requires at least a dipeptide for an efficient rate of reaction. N-terminal L-methionine is a prerequisite for activity but the enzyme has broad specificity at other positions. The protein is Peptide deformylase of Rhodopseudomonas palustris (strain BisB18).